The sequence spans 60 residues: uncharacterized protein (60 aa).

This is an uncharacterized protein from Methanocaldococcus jannaschii (strain ATCC 43067 / DSM 2661 / JAL-1 / JCM 10045 / NBRC 100440) (Methanococcus jannaschii).